The primary structure comprises 559 residues: Alpha-(1,6)-fucosyltransferase (559 aa).

At 1-4 (MLKC) the chain is on the cytoplasmic side. A helical; Signal-anchor for type II membrane protein transmembrane segment spans residues 5–24 (IAAVGTVVWMTMFLFLYSQL). Residues 25–559 (SNNQSGGDSI…RKFKFEALLD (535 aa)) are Lumenal-facing. N-linked (GlcNAc...) asparagine glycosylation occurs at asparagine 27. Residues 63–74 (QERNDQHKKIME) show a composition bias toward basic and acidic residues. The disordered stretch occupies residues 63–90 (QERNDQHKKIMEQSHQLPPNPENPSLPK). Residues 80–90 (PPNPENPSLPK) show a composition bias toward pro residues. N-linked (GlcNAc...) asparagine glycosylation is present at asparagine 134. 3 disulfide bridges follow: cysteine 188/cysteine 251, cysteine 196/cysteine 214, and cysteine 202/cysteine 206. The region spanning 190–480 (EAKTLVCNLD…ADDGSKFHSL (291 aa)) is the GT23 domain. The segment at 351–352 (RR) is important for donor substrate binding. An intrachain disulfide couples cysteine 452 to cysteine 459. Residues 489–550 (QQAHEVIVIE…PSYKVVNDWR (62 aa)) form the SH3 domain.

This sequence belongs to the glycosyltransferase 23 family. The cofactor is Mn(2+). Mg(2+) serves as cofactor.

Its subcellular location is the golgi apparatus. The protein localises to the golgi stack membrane. The catalysed reaction is N(4)-{beta-D-GlcNAc-(1-&gt;2)-alpha-D-Man-(1-&gt;3)-[beta-D-GlcNAc-(1-&gt;2)-alpha-D-Man-(1-&gt;6)]-beta-D-Man-(1-&gt;4)-beta-D-GlcNAc-(1-&gt;4)-beta-D-GlcNAc}-L-asparaginyl-[protein] + GDP-beta-L-fucose = an N(4)-{beta-D-GlcNAc-(1-&gt;2)-alpha-D-Man-(1-&gt;3)-[beta-D-GlcNAc-(1-&gt;2)-alpha-D-Man-(1-&gt;6)]-beta-D-Man-(1-&gt;4)-beta-D-GlcNAc-(1-&gt;4)-[alpha-L-Fuc-(1-&gt;6)]-beta-D-GlcNAc}-L-asparaginyl-[protein] + GDP + H(+). Its pathway is protein modification; protein glycosylation. With respect to regulation, inhibited by Fe(3+), Ni(2+) and Cu(2+). In terms of biological role, catalyzes the addition of fucose in alpha 1-6 linkage to the first GlcNAc residue, next to the peptide chains in N-glycans. The addition is prevented if the GlcNAc residue is already fucosylated. Involved in susceptibility to the nematotoxic C.cinerea galectin Cgl2, likely by contributing to the synthesis of core alpha-1,6-fucosylated N-glycans to which Cgl2 binds. The sequence is that of Alpha-(1,6)-fucosyltransferase from Caenorhabditis elegans.